Consider the following 102-residue polypeptide: Small ribosomal subunit protein uS10 (102 aa).

Belongs to the universal ribosomal protein uS10 family. In terms of assembly, part of the 30S ribosomal subunit.

In terms of biological role, involved in the binding of tRNA to the ribosomes. This chain is Small ribosomal subunit protein uS10, found in Clostridium perfringens (strain ATCC 13124 / DSM 756 / JCM 1290 / NCIMB 6125 / NCTC 8237 / Type A).